The primary structure comprises 72 residues: Teretoxin Tan11.1 (72 aa).

The first 21 residues, 1–21 (MLATKMSVTFCFLLMLTTVML), serve as a signal peptide directing secretion. A propeptide spanning residues 22-31 (PTEAKTVAGR) is cleaved from the precursor.

This sequence belongs to the teretoxin H (TH) superfamily. Contains 4 disulfide bonds. As to expression, expressed by the venom duct.

Its subcellular location is the secreted. The sequence is that of Teretoxin Tan11.1 from Terebra anilis (Auger snail).